Reading from the N-terminus, the 298-residue chain is Aclacinomycin methylesterase RdmC (298 aa).

The region spanning 24–277 is the AB hydrolase-1 domain; sequence PALLLVMGGN…LAEIPGMGHA (254 aa). Catalysis depends on residues S102, D248, and H276.

Belongs to the AB hydrolase superfamily. Hydrolase RdmC family. Monomer.

It carries out the reaction aclacinomycin T + H2O = 15-demethylaclacinomycin T + methanol. Its pathway is antibiotic biosynthesis; aclacinomycin biosynthesis. In terms of biological role, involved in the biosynthesis of the anthracycline aclacinomycin which is an aromatic polyketide antibiotic that exhibits high cytotoxicity and is widely applied in the chemotherapy of a variety of cancers. Catalyzes the removal of the methoxy group from the C-15 position of aclacinomycin T and A to yield 15-demethoxyaclacinomycin T and A, respectively. This Streptomyces purpurascens protein is Aclacinomycin methylesterase RdmC (rdmC).